A 162-amino-acid chain; its full sequence is Calcium vector protein (162 aa).

Position 2 is an N-acetylalanine (Ala-2). 4 EF-hand domains span residues 12–47 (EEKDECMKIFDIFDRNAENIAPVSDTMDMLTKLGQT), 49–84 (TKRETEAIMKEARGPKGDKKNIGPEEWLTLCSKWVR), 86–121 (DDEEEILRAFKVFDANGDGVIDFDEFKFIMQKVGEE), and 123–158 (LTDAEVEEAMKEADEDGNGVIDIPEFMDLIKKSKNA). Lys-96 is subject to N6,N6,N6-trimethyllysine. Ca(2+)-binding residues include Asp-99, Asn-101, Asp-103, and Glu-110. Lys-117 carries the post-translational modification N6,N6,N6-trimethyllysine. Residues Asp-136, Asp-138, Asn-140, and Glu-147 each coordinate Ca(2+).

It is found in the cytoplasm. In terms of biological role, the exact function of this protein is not yet known. It interacts with CAVPT, a protein also of unknown function, in a calcium-dependent way. This protein binds two calcium ions. The polypeptide is Calcium vector protein (Branchiostoma lanceolatum (Common lancelet)).